The primary structure comprises 291 residues: Beta-lactamase CTX-M-8 (291 aa).

A signal peptide spans 1–30; that stretch reads MMRHRVKRMMLMTTACISLLLGSAPLYAQA. The Nucleophile; acyl-ester intermediate role is filled by Ser73. Positions 76, 133, 169, and 240 each coordinate a beta-lactam.

Belongs to the class-A beta-lactamase family. As to quaternary structure, monomer.

The protein localises to the secreted. The enzyme catalyses a beta-lactam + H2O = a substituted beta-amino acid. Inhibited by the beta-lactamase-blocking agents clavulanic acid, tazobactam and sulbactam; in the DH5alpha strain of E.coli. Functionally, extended-spectrum beta-lactamase (ESBL) which confers resistance to penicillins, as well as first, third and fourth-generation cephalosporins. Has cefotaxime-hydrolyzing activity. Inactive against cephalosporin antibiotic, cefoxitin, and the carbapenem, imipenem. The sequence is that of Beta-lactamase CTX-M-8 from Citrobacter amalonaticus.